The primary structure comprises 306 residues: UDP-N-acetylenolpyruvoylglucosamine reductase (306 aa).

The region spanning 34 to 198 (VGGPADLLIT…LEVTFKLHNS (165 aa)) is the FAD-binding PCMH-type domain. Arg177 is a catalytic residue. Residue Ser227 is the Proton donor of the active site. The active site involves Glu297.

Belongs to the MurB family. FAD serves as cofactor.

It is found in the cytoplasm. The enzyme catalyses UDP-N-acetyl-alpha-D-muramate + NADP(+) = UDP-N-acetyl-3-O-(1-carboxyvinyl)-alpha-D-glucosamine + NADPH + H(+). It functions in the pathway cell wall biogenesis; peptidoglycan biosynthesis. Its function is as follows. Cell wall formation. This Clostridium botulinum (strain Langeland / NCTC 10281 / Type F) protein is UDP-N-acetylenolpyruvoylglucosamine reductase.